Here is a 264-residue protein sequence, read N- to C-terminus: Undecaprenyl-diphosphatase (264 aa).

8 helical membrane-spanning segments follow: residues 1–21, 39–59, 83–103, 113–133, 143–163, 181–201, 220–240, and 244–264; these read MDIVHIIVLSLVQGITEFLPI, QGLAFDVAVHIGTLTAIVFYF, STLVWAVCFATIPAGIFGLAF, SGIVIAVTTIIFGVVLYLADK, VTIKLALIIGLAQALALIPGV, VGSANFSFLMSIPIILLAGGL, LAALISAVSAYICVKLFMSII, and SMTPFVVYRLILGVFLLFIFV.

It belongs to the UppP family.

The protein localises to the cell inner membrane. It catalyses the reaction di-trans,octa-cis-undecaprenyl diphosphate + H2O = di-trans,octa-cis-undecaprenyl phosphate + phosphate + H(+). Functionally, catalyzes the dephosphorylation of undecaprenyl diphosphate (UPP). Confers resistance to bacitracin. This is Undecaprenyl-diphosphatase from Campylobacter curvus (strain 525.92).